Reading from the N-terminus, the 244-residue chain is LOB domain-containing protein 17 (244 aa).

The LOB domain maps to 6–108; that stretch reads SPCGACKFLR…TQLEILKQQA (103 aa).

Belongs to the LOB domain-containing protein family. In terms of tissue distribution, expressed in roots, stems, leaves and flowers.

The polypeptide is LOB domain-containing protein 17 (LBD17) (Arabidopsis thaliana (Mouse-ear cress)).